The chain runs to 155 residues: MSEQNNTEMTFQIQRIYTKDISFEAPNAPHVFQKDWQPEVKLDLDTASSQLADDVYEVVLRVTVTASLGEETAFLCEVQQGGIFSIAGIEGTQMAHCLGAYCPNILFPYARECITSLVSRGTFPQLNLAPVNFDALFMNYLQQQAGEGTEEHQDA.

The protein belongs to the SecB family. As to quaternary structure, homotetramer, a dimer of dimers. One homotetramer interacts with 1 SecA dimer.

Its subcellular location is the cytoplasm. In terms of biological role, one of the proteins required for the normal export of preproteins out of the cell cytoplasm. It is a molecular chaperone that binds to a subset of precursor proteins, maintaining them in a translocation-competent state. It also specifically binds to its receptor SecA. This chain is Protein-export protein SecB, found in Escherichia fergusonii (strain ATCC 35469 / DSM 13698 / CCUG 18766 / IAM 14443 / JCM 21226 / LMG 7866 / NBRC 102419 / NCTC 12128 / CDC 0568-73).